A 376-amino-acid polypeptide reads, in one-letter code: Pyrimidine monooxygenase RutA (376 aa).

FMN-binding positions include 61–62 (IK), Asn127, Glu136, 152–153 (RY), and Ser202.

The protein belongs to the NtaA/SnaA/DszA monooxygenase family. RutA subfamily.

It carries out the reaction uracil + FMNH2 + NADH + O2 = (Z)-3-ureidoacrylate + FMN + NAD(+) + H2O + H(+). The enzyme catalyses thymine + FMNH2 + NADH + O2 = (Z)-2-methylureidoacrylate + FMN + NAD(+) + H2O + H(+). Functionally, catalyzes the pyrimidine ring opening between N-3 and C-4 by an unusual flavin hydroperoxide-catalyzed mechanism, adding oxygen atoms in the process to yield ureidoacrylate peracid, that immediately reacts with FMN forming ureidoacrylate and FMN-N(5)-oxide. The FMN-N(5)-oxide reacts spontaneously with NADH to produce FMN. Requires the flavin reductase RutF to regenerate FMN in vivo. The protein is Pyrimidine monooxygenase RutA of Methylorubrum extorquens (strain CM4 / NCIMB 13688) (Methylobacterium extorquens).